We begin with the raw amino-acid sequence, 246 residues long: Acetoacetate decarboxylase (246 aa).

Lys116 serves as the catalytic Schiff-base intermediate with acetoacetate.

Belongs to the ADC family.

The enzyme catalyses acetoacetate + H(+) = acetone + CO2. Catalyzes the conversion of acetoacetate to acetone and carbon dioxide. The polypeptide is Acetoacetate decarboxylase (Burkholderia mallei (strain NCTC 10247)).